A 606-amino-acid chain; its full sequence is MAKIVGIDLGTTNSLIAYLEGGRPTIIPNAEGSRLTPSVVAFTKDGQLLVGEPAKRQAIVNAERTIKSIKRHMGTNYKVKIDDKEYTPQEISAMILRKLKKDAEAYLGEPIEKAVITVPAYFSDAQRQATKDAGAIAGLEVVRIINEPTAAALAYGLDKEGHQKILVFDLGGGTFDVSILEIGEGVFEVIATAGNNRLGGDDFDERIVNWLVEMFMEEHGINLKEDRTALQRLFEAAEKAKIELSSKLQTEINLPFIAMKGNTPLHISVTLTRAKFEELTYDLVEKTKEPTERALKDAGLSPSQIDKIILVGGATRMPCIQEWIKKHFGKEPQRNVNPDEAVALGAAIQAGVIGGEIRDIVLVDVTPLSLGIETLGGVFTKIIERNTPIPVSKSQIFTTAADYQTSVEIHVLQGERALAKDNISLGRFILDGIPPAPRGVPQIEVTFDIDVNGIVHVSARDKATGREQRITISNAIRLSEEEIKRMTEEAKRFEEEDRKRREEIETKNQAEHLIYTARKTLKDYGDKVSKDLVQRVEDKIKNLEELIKPERINVEQVKKGMEELTQALGEIGQFMYQSASAAGNPGQGQTNENPGGKTIDGDYKVN.

At Thr174 the chain carries Phosphothreonine; by autocatalysis. Residues 579 to 593 (ASAAGNPGQGQTNEN) show a composition bias toward polar residues. The segment at 579–606 (ASAAGNPGQGQTNENPGGKTIDGDYKVN) is disordered.

It belongs to the heat shock protein 70 family.

Acts as a chaperone. The protein is Chaperone protein DnaK of Dictyoglomus thermophilum (strain ATCC 35947 / DSM 3960 / H-6-12).